A 340-amino-acid polypeptide reads, in one-letter code: S-adenosylmethionine:tRNA ribosyltransferase-isomerase (340 aa).

This sequence belongs to the QueA family. As to quaternary structure, monomer.

It is found in the cytoplasm. The enzyme catalyses 7-aminomethyl-7-carbaguanosine(34) in tRNA + S-adenosyl-L-methionine = epoxyqueuosine(34) in tRNA + adenine + L-methionine + 2 H(+). It functions in the pathway tRNA modification; tRNA-queuosine biosynthesis. Functionally, transfers and isomerizes the ribose moiety from AdoMet to the 7-aminomethyl group of 7-deazaguanine (preQ1-tRNA) to give epoxyqueuosine (oQ-tRNA). The chain is S-adenosylmethionine:tRNA ribosyltransferase-isomerase from Francisella tularensis subsp. tularensis (strain FSC 198).